Consider the following 118-residue polypeptide: Ig heavy chain V region X24 (118 aa).

One can recognise an Ig-like domain in the interval 1–111 (EVKLLESGGG…GYFDYWGQGT (111 aa)).

The polypeptide is Ig heavy chain V region X24 (Mus musculus (Mouse)).